A 346-amino-acid chain; its full sequence is N-acetyl-gamma-glutamyl-phosphate reductase (346 aa).

C151 is an active-site residue.

The protein belongs to the NAGSA dehydrogenase family. Type 1 subfamily.

Its subcellular location is the cytoplasm. The enzyme catalyses N-acetyl-L-glutamate 5-semialdehyde + phosphate + NADP(+) = N-acetyl-L-glutamyl 5-phosphate + NADPH + H(+). It participates in amino-acid biosynthesis; L-arginine biosynthesis; N(2)-acetyl-L-ornithine from L-glutamate: step 3/4. Catalyzes the NADPH-dependent reduction of N-acetyl-5-glutamyl phosphate to yield N-acetyl-L-glutamate 5-semialdehyde. This Ehrlichia chaffeensis (strain ATCC CRL-10679 / Arkansas) protein is N-acetyl-gamma-glutamyl-phosphate reductase.